Here is a 95-residue protein sequence, read N- to C-terminus: DNA-directed RNA polymerase subunit Rpo11 (95 aa).

Belongs to the archaeal Rpo11/eukaryotic RPB11/RPC19 RNA polymerase subunit family. As to quaternary structure, part of the RNA polymerase complex.

The protein localises to the cytoplasm. It carries out the reaction RNA(n) + a ribonucleoside 5'-triphosphate = RNA(n+1) + diphosphate. DNA-dependent RNA polymerase (RNAP) catalyzes the transcription of DNA into RNA using the four ribonucleoside triphosphates as substrates. In Pyrococcus furiosus (strain ATCC 43587 / DSM 3638 / JCM 8422 / Vc1), this protein is DNA-directed RNA polymerase subunit Rpo11.